We begin with the raw amino-acid sequence, 446 residues long: Alkylglycerol monooxygenase (446 aa).

The next 2 membrane-spanning stretches (helical) occupy residues 39–59 (VNQA…LGWL) and 103–123 (FHFL…FLGV). One can recognise a Fatty acid hydroxylase domain in the interval 117–248 (WLAFLGVDMG…LIIWDRMFGT (132 aa)). Positions 131–135 (HRFAH) match the Histidine box-1 motif. Positions 144 to 148 (HQVHH) match the Histidine box-2 motif. The helical transmembrane segment at 167 to 187 (FSSWIFYSPLALLIPPSVFAV) threads the bilayer. Residues 220–224 (HRVHH) carry the Histidine box-3 motif. 3 helical membrane passes run 329-349 (AWSP…LDVY), 362-382 (LTVI…GFLI), and 410-430 (PLLP…TIYW).

It belongs to the sterol desaturase family. TMEM195 subfamily. It depends on Fe cation as a cofactor.

Its subcellular location is the endoplasmic reticulum membrane. The catalysed reaction is 1-O-(1,2-saturated-alkyl)-sn-glycerol + (6R)-L-erythro-5,6,7,8-tetrahydrobiopterin + O2 = a 1-(1-hydroxyalkyl)-sn-glycerol + (6R)-L-erythro-6,7-dihydrobiopterin + H2O. Its function is as follows. Glyceryl-ether monooxygenase that cleaves the O-alkyl bond of ether lipids. Ether lipids are essential components of brain membranes. The sequence is that of Alkylglycerol monooxygenase (agmo) from Danio rerio (Zebrafish).